The following is a 292-amino-acid chain: 4-hydroxy-tetrahydrodipicolinate synthase (292 aa).

Thr-45 is a binding site for pyruvate. Tyr-133 functions as the Proton donor/acceptor in the catalytic mechanism. The active-site Schiff-base intermediate with substrate is the Lys-162. Ile-204 contacts pyruvate.

It belongs to the DapA family. In terms of assembly, homotetramer; dimer of dimers.

Its subcellular location is the cytoplasm. The enzyme catalyses L-aspartate 4-semialdehyde + pyruvate = (2S,4S)-4-hydroxy-2,3,4,5-tetrahydrodipicolinate + H2O + H(+). The protein operates within amino-acid biosynthesis; L-lysine biosynthesis via DAP pathway; (S)-tetrahydrodipicolinate from L-aspartate: step 3/4. Functionally, catalyzes the condensation of (S)-aspartate-beta-semialdehyde [(S)-ASA] and pyruvate to 4-hydroxy-tetrahydrodipicolinate (HTPA). This is 4-hydroxy-tetrahydrodipicolinate synthase from Nitratidesulfovibrio vulgaris (strain ATCC 29579 / DSM 644 / CCUG 34227 / NCIMB 8303 / VKM B-1760 / Hildenborough) (Desulfovibrio vulgaris).